The primary structure comprises 748 residues: Polyribonucleotide nucleotidyltransferase (748 aa).

Mg(2+) is bound by residues Asp-484 and Asp-490. Residues 551–610 (PRIETMSVPKDKIRDVIGTGGKVIREIVATTGAKVDIEDDGTVRLSSSDPANIEAAREWI) enclose the KH domain. The region spanning 620–688 (GKIYNGKVVN…NRGKVRLSMR (69 aa)) is the S1 motif domain. The disordered stretch occupies residues 693–748 (ETGAELDDNRPPRENAERRGGERPRRDRGPRRESGDRPARRDMEPEFAPAFLRKDS). Positions 699 to 736 (DDNRPPRENAERRGGERPRRDRGPRRESGDRPARRDME) are enriched in basic and acidic residues.

This sequence belongs to the polyribonucleotide nucleotidyltransferase family. Requires Mg(2+) as cofactor.

The protein resides in the cytoplasm. It carries out the reaction RNA(n+1) + phosphate = RNA(n) + a ribonucleoside 5'-diphosphate. Involved in mRNA degradation. Catalyzes the phosphorolysis of single-stranded polyribonucleotides processively in the 3'- to 5'-direction. The sequence is that of Polyribonucleotide nucleotidyltransferase from Zymomonas mobilis subsp. mobilis (strain ATCC 31821 / ZM4 / CP4).